The chain runs to 69 residues: UPF0346 protein llmg_2280 (69 aa).

The protein belongs to the UPF0346 family.

This Lactococcus lactis subsp. cremoris (strain MG1363) protein is UPF0346 protein llmg_2280.